A 256-amino-acid chain; its full sequence is Ribonuclease HII (256 aa).

One can recognise an RNase H type-2 domain in the interval 72–256 (ALICGIDEVG…SFEPIKSMMK (185 aa)). The a divalent metal cation site is built by D78, E79, and D170.

Belongs to the RNase HII family. Requires Mn(2+) as cofactor. Mg(2+) is required as a cofactor.

It localises to the cytoplasm. It carries out the reaction Endonucleolytic cleavage to 5'-phosphomonoester.. In terms of biological role, endonuclease that specifically degrades the RNA of RNA-DNA hybrids. This Staphylococcus epidermidis (strain ATCC 12228 / FDA PCI 1200) protein is Ribonuclease HII.